We begin with the raw amino-acid sequence, 245 residues long: uncharacterized protein (245 aa).

This is an uncharacterized protein from Rhodobacter capsulatus (Rhodopseudomonas capsulata).